The sequence spans 661 residues: UvrABC system protein B (661 aa).

Positions lysine 26–arginine 413 constitute a Helicase ATP-binding domain. Glycine 39–threonine 46 provides a ligand contact to ATP. The Beta-hairpin signature appears at tyrosine 92–isoleucine 115. The Helicase C-terminal domain occupies glutamine 430–isoleucine 596. The UVR domain maps to glutamate 625–glutamate 660.

The protein belongs to the UvrB family. Forms a heterotetramer with UvrA during the search for lesions. Interacts with UvrC in an incision complex.

The protein resides in the cytoplasm. Functionally, the UvrABC repair system catalyzes the recognition and processing of DNA lesions. A damage recognition complex composed of 2 UvrA and 2 UvrB subunits scans DNA for abnormalities. Upon binding of the UvrA(2)B(2) complex to a putative damaged site, the DNA wraps around one UvrB monomer. DNA wrap is dependent on ATP binding by UvrB and probably causes local melting of the DNA helix, facilitating insertion of UvrB beta-hairpin between the DNA strands. Then UvrB probes one DNA strand for the presence of a lesion. If a lesion is found the UvrA subunits dissociate and the UvrB-DNA preincision complex is formed. This complex is subsequently bound by UvrC and the second UvrB is released. If no lesion is found, the DNA wraps around the other UvrB subunit that will check the other stand for damage. The sequence is that of UvrABC system protein B from Bacillus licheniformis (strain ATCC 14580 / DSM 13 / JCM 2505 / CCUG 7422 / NBRC 12200 / NCIMB 9375 / NCTC 10341 / NRRL NRS-1264 / Gibson 46).